Consider the following 179-residue polypeptide: MSRIGKNPVPIPEKVSVEISGLTVKVKGPKGELERVLPDGVSVSQADNAVTVSPSDTSRRSRERHGLCRTLVANMVEGVSKGFSKKLEIIGVGYRAQVKGKKLVVSAGYSHPVEMDAPEGVTFAVENNTLVTVSGADKELVGNEAAKVRGIRPPEPYKGKGIKYQGERILRKAGKTGKK.

Belongs to the universal ribosomal protein uL6 family. As to quaternary structure, part of the 50S ribosomal subunit.

Its function is as follows. This protein binds to the 23S rRNA, and is important in its secondary structure. It is located near the subunit interface in the base of the L7/L12 stalk, and near the tRNA binding site of the peptidyltransferase center. The chain is Large ribosomal subunit protein uL6 from Synechococcus sp. (strain RCC307).